Consider the following 430-residue polypeptide: Asparagine--tRNA ligase (430 aa).

It belongs to the class-II aminoacyl-tRNA synthetase family. In terms of assembly, homodimer.

Its subcellular location is the cytoplasm. It catalyses the reaction tRNA(Asn) + L-asparagine + ATP = L-asparaginyl-tRNA(Asn) + AMP + diphosphate + H(+). This chain is Asparagine--tRNA ligase, found in Staphylococcus aureus (strain bovine RF122 / ET3-1).